Consider the following 825-residue polypeptide: Ent-copalyl diphosphate synthase 2, chloroplastic (825 aa).

The transit peptide at 1–70 (MVLSSSCTTV…KGSSLTPIVR (70 aa)) directs the protein to the chloroplast. Lys241 lines the substrate pocket. Residues 373-376 (EVDD) carry the DXDD motif motif. Lys459 provides a ligand contact to substrate.

It belongs to the terpene synthase family. Tpsc subfamily. Mg(2+) is required as a cofactor. As to expression, expressed in tassels.

It localises to the plastid. The protein resides in the chloroplast. The catalysed reaction is (2E,6E,10E)-geranylgeranyl diphosphate = ent-copalyl diphosphate. It functions in the pathway plant hormone biosynthesis; gibberellin biosynthesis. Its function is as follows. Involved in gibberellin biosynthesis. Catalyzes the conversion of geranylgeranyl diphosphate to the gibberellin precursor ent-copalyl diphosphate (ent-CPP). Involved in the production of antifungal dolabralexin phytoalexins in response to biotic and abiotic stresses. In response to fungal infection and in associtation with KSL4, is involved in the production dolabradiene, a type of antifungal phytoalexin. The sequence is that of Ent-copalyl diphosphate synthase 2, chloroplastic from Zea mays (Maize).